Consider the following 255-residue polypeptide: Pyridoxine 5'-phosphate synthase (255 aa).

3-amino-2-oxopropyl phosphate-binding residues include Asn-8 and Arg-19. His-44 acts as the Proton acceptor in catalysis. 1-deoxy-D-xylulose 5-phosphate contacts are provided by Arg-46 and His-51. The active-site Proton acceptor is Glu-74. Thr-111 contributes to the 1-deoxy-D-xylulose 5-phosphate binding site. Catalysis depends on His-202, which acts as the Proton donor. 3-amino-2-oxopropyl phosphate contacts are provided by residues Asp-203 and 225-226 (GH).

Belongs to the PNP synthase family. In terms of assembly, homooctamer; tetramer of dimers.

It localises to the cytoplasm. It catalyses the reaction 3-amino-2-oxopropyl phosphate + 1-deoxy-D-xylulose 5-phosphate = pyridoxine 5'-phosphate + phosphate + 2 H2O + H(+). The protein operates within cofactor biosynthesis; pyridoxine 5'-phosphate biosynthesis; pyridoxine 5'-phosphate from D-erythrose 4-phosphate: step 5/5. Its function is as follows. Catalyzes the complicated ring closure reaction between the two acyclic compounds 1-deoxy-D-xylulose-5-phosphate (DXP) and 3-amino-2-oxopropyl phosphate (1-amino-acetone-3-phosphate or AAP) to form pyridoxine 5'-phosphate (PNP) and inorganic phosphate. In Xanthomonas axonopodis pv. citri (strain 306), this protein is Pyridoxine 5'-phosphate synthase.